The chain runs to 477 residues: Mannitol 2-dehydrogenase (477 aa).

19-30 (IVHIGVGNFHRA) lines the NAD(+) pocket.

The protein belongs to the mannitol dehydrogenase family. As to quaternary structure, monomer.

It carries out the reaction D-mannitol + NAD(+) = D-fructose + NADH + H(+). The protein is Mannitol 2-dehydrogenase (mtlK) of Cereibacter sphaeroides (Rhodobacter sphaeroides).